Reading from the N-terminus, the 465-residue chain is 3-isopropylmalate dehydratase large subunit (465 aa).

Residues Cys347, Cys407, and Cys410 each contribute to the [4Fe-4S] cluster site.

Belongs to the aconitase/IPM isomerase family. LeuC type 1 subfamily. As to quaternary structure, heterodimer of LeuC and LeuD. [4Fe-4S] cluster is required as a cofactor.

It carries out the reaction (2R,3S)-3-isopropylmalate = (2S)-2-isopropylmalate. The protein operates within amino-acid biosynthesis; L-leucine biosynthesis; L-leucine from 3-methyl-2-oxobutanoate: step 2/4. Catalyzes the isomerization between 2-isopropylmalate and 3-isopropylmalate, via the formation of 2-isopropylmaleate. This Aeromonas salmonicida (strain A449) protein is 3-isopropylmalate dehydratase large subunit.